Here is a 180-residue protein sequence, read N- to C-terminus: Major urinary protein 1 (180 aa).

Residues 1-18 (MKMLLLLCLGLTLVCVHA) form the signal peptide. Cysteine 82 and cysteine 175 are joined by a disulfide.

The protein belongs to the calycin superfamily. Lipocalin family. As to expression, abundant in the urine of adult male mice but absent from that of females.

Its subcellular location is the secreted. Binds pheromones that are released from drying urine of males. These pheromones affect the sexual behavior of females. This is Major urinary protein 1 (Mup1) from Mus musculus (Mouse).